The sequence spans 357 residues: Dynein axonemal assembly factor 10 (357 aa).

WD repeat units follow at residues 63-105 (EKAK…VPVY), 115-154 (NTID…DPVA), 162-205 (ENKR…LRWE), 207-249 (NIKN…PTKG), 257-297 (AHKS…QRSK), and 319-357 (LSTQ…LHKI).

Component of the PAQosome complex which is responsible for the biogenesis of several protein complexes and which consists of R2TP complex members RUVBL1, RUVBL2, RPAP3 and PIH1D1, URI complex members PFDN2, PFDN6, PDRG1, UXT and URI1 as well as ASDURF, POLR2E and DNAAF10/WDR92. Interacts with PIH1D1; the interaction associates DNAAF10 with the R2TP complex. Interacts with several dynein axonemal assembly factors.

Its subcellular location is the dynein axonemal particle. Functionally, key assembly factor specifically required for the stability of axonemal dynein heavy chains in cytoplasm. This chain is Dynein axonemal assembly factor 10 (DNAAF10), found in Bos taurus (Bovine).